The chain runs to 72 residues: Conotoxin LvVIA (72 aa).

A signal peptide spans 1–17 (VLIIAVLFLTASELVTA). Residues 18–41 (DYTRDKWQYRAASLRDAMRNFRDT) constitute a propeptide that is removed on maturation. 3 disulfides stabilise this stretch: Cys44–Cys58, Cys51–Cys63, and Cys57–Cys70.

The protein belongs to the conotoxin O1 superfamily. In terms of tissue distribution, expressed by the venom duct.

It is found in the secreted. The chain is Conotoxin LvVIA from Conus lividus (Livid cone).